Here is a 313-residue protein sequence, read N- to C-terminus: MIQSKKIALIGSGNIGGMIAYLIRLKNLGDVVLLDINDGMAKGKALDIAESSPIGKYNGEIFGTNNYADIENADAIIVTAGITRKPGMSRDDLISTNVNIIKEIATNIAKYAPNAFVIVVTNPLDVMVLAMYRYSHLPSNMIVGMAGVLDSARFSYFIAKELNVSVESVDSLVLGGHGDIMLPLIRYSSVSGVSIADLIKLGMITHDKVTEIVERTRKGGEEIVSLLKTGSAYYAPAESAVLMLDSYLNDKKLMLPCSAYLKGEYGVHDLFVGVPIIIGKNGVEKIVELQLTEEENSIFNNSVALIQNLVANI.

Residues 11 to 16 (GSGNIG) and aspartate 35 each bind NAD(+). Positions 84 and 90 each coordinate substrate. Residues asparagine 97 and 120–122 (VTN) each bind NAD(+). Residues asparagine 122 and arginine 153 each coordinate substrate. Histidine 177 acts as the Proton acceptor in catalysis.

It belongs to the LDH/MDH superfamily. MDH type 3 family.

It catalyses the reaction (S)-malate + NAD(+) = oxaloacetate + NADH + H(+). Catalyzes the reversible oxidation of malate to oxaloacetate. This is Malate dehydrogenase from Ehrlichia ruminantium (strain Welgevonden).